We begin with the raw amino-acid sequence, 718 residues long: Calpastatin (718 aa).

Disordered stretches follow at residues 1–189 (MNPA…MSST) and 210–238 (EKKT…LSSD). Basic residues predominate over residues 20–29 (PHSKKRHRRQ). Composition is skewed to basic and acidic residues over residues 30–61 (DAKT…EHTK) and 68–104 (HASD…KPQD). A Glycyl lysine isopeptide (Lys-Gly) (interchain with G-Cter in SUMO2) cross-link involves residue K32. K49 bears the N6-acetyllysine mark. S86 is subject to Phosphoserine. Residues 114 to 124 (AAGTTAAPGKA) show a composition bias toward low complexity. A phosphoserine mark is found at S133, S222, and S243. The stretch at 170 to 222 (TQEDSTAYTGPEISDPMSSTYIEELGKREVTIPPKYRELLEKKTGVAGPPPDS) is one Inhibitory domain 1 repeat. Disordered stretches follow at residues 266–291 (ESAK…AMSD) and 320–509 (EAKR…QLPA). S290 is subject to Blocked amino end (Ser); in form erythrocyte. The stretch at 307 to 359 (EPELDLSSIKEVAEAKRKEEKVEKCGEDDETVPAEYRLKPATDKDGKPLLPEP) is one Inhibitory domain 2 repeat. Composition is skewed to basic and acidic residues over residues 320-331 (EAKRKEEKVEKC), 342-377 (YRLK…ELSK), and 384-399 (SNEK…EESK). 3 positions are modified to phosphoserine: S367, S369, and S376. Over residues 400-411 (AAVPAPVAEAVP) the composition is skewed to low complexity. S444 is subject to Phosphoserine. Residues 446 to 496 (GRKEADPEEGKPVADKIKEKSKEEEREKLGEKEETIPPDYRLEEAKDKDGK) are compositionally biased toward basic and acidic residues. The stretch at 450–503 (ADPEEGKPVADKIKEKSKEEEREKLGEKEETIPPDYRLEEAKDKDGKPLLPSEP) is one Inhibitory domain 3 repeat. Residues S520, S531, S579, and S581 each carry the phosphoserine modification. Residues 543 to 718 (VSEVVSQSPA…KPKANEKNAS (176 aa)) are disordered. Residues 566–579 (PSNKELDDALDKLS) show a composition bias toward basic and acidic residues. The Inhibitory domain 4 repeat unit spans residues 587–640 (PDPDENKPMEDKVKERAKKEHKDKLGERDDTIPPEYRHLLDQGEQDKPEKPPTK). 2 stretches are compositionally biased toward basic and acidic residues: residues 587–650 (PDPD…KPAG) and 706–718 (ETSK…KNAS).

It belongs to the protease inhibitor I27 (calpastatin) family.

Its function is as follows. Specific inhibition of calpain (calcium-dependent cysteine protease). Plays a key role in postmortem tenderization of meat and have been proposed to be involved in muscle protein degradation in living tissue. In Oryctolagus cuniculus (Rabbit), this protein is Calpastatin (CAST).